The sequence spans 277 residues: Thymidylate synthase (277 aa).

Arg21 contacts dUMP. A (6R)-5,10-methylene-5,6,7,8-tetrahydrofolate-binding site is contributed by His51. Position 126–127 (126–127 (RR)) interacts with dUMP. The active-site Nucleophile is Cys159. Residues 179 to 182 (RSGD), Asn190, and 220 to 222 (HLY) each bind dUMP. A (6R)-5,10-methylene-5,6,7,8-tetrahydrofolate-binding site is contributed by Asp182. Ala276 provides a ligand contact to (6R)-5,10-methylene-5,6,7,8-tetrahydrofolate.

This sequence belongs to the thymidylate synthase family. Bacterial-type ThyA subfamily. Homodimer.

Its subcellular location is the cytoplasm. It catalyses the reaction dUMP + (6R)-5,10-methylene-5,6,7,8-tetrahydrofolate = 7,8-dihydrofolate + dTMP. Its pathway is pyrimidine metabolism; dTTP biosynthesis. Functionally, catalyzes the reductive methylation of 2'-deoxyuridine-5'-monophosphate (dUMP) to 2'-deoxythymidine-5'-monophosphate (dTMP) while utilizing 5,10-methylenetetrahydrofolate (mTHF) as the methyl donor and reductant in the reaction, yielding dihydrofolate (DHF) as a by-product. This enzymatic reaction provides an intracellular de novo source of dTMP, an essential precursor for DNA biosynthesis. This chain is Thymidylate synthase, found in Alcanivorax borkumensis (strain ATCC 700651 / DSM 11573 / NCIMB 13689 / SK2).